We begin with the raw amino-acid sequence, 66 residues long: Photosystem II reaction center protein H (66 aa).

Residues 27–47 (GAVPIMTVIGLLLLVFLVILL) form a helical membrane-spanning segment.

Belongs to the PsbH family. In terms of assembly, PSII is composed of 1 copy each of membrane proteins PsbA, PsbB, PsbC, PsbD, PsbE, PsbF, PsbH, PsbI, PsbJ, PsbK, PsbL, PsbM, PsbT, PsbX, PsbY, Psb30/Ycf12, peripheral proteins PsbO, CyanoQ (PsbQ), PsbU, PsbV and a large number of cofactors. It forms dimeric complexes.

It localises to the cellular thylakoid membrane. Functionally, one of the components of the core complex of photosystem II (PSII), required for its stability and/or assembly. PSII is a light-driven water:plastoquinone oxidoreductase that uses light energy to abstract electrons from H(2)O, generating O(2) and a proton gradient subsequently used for ATP formation. It consists of a core antenna complex that captures photons, and an electron transfer chain that converts photonic excitation into a charge separation. The sequence is that of Photosystem II reaction center protein H from Prochlorococcus marinus (strain MIT 9515).